We begin with the raw amino-acid sequence, 2885 residues long: Chromodomain-helicase-DNA-binding protein 9 (2885 aa).

A disordered region spans residues 173–195; the sequence is QCSSLHSQQSRSNLNPGQNSLGQ. Residue Lys-197 forms a Glycyl lysine isopeptide (Lys-Gly) (interchain with G-Cter in SUMO2) linkage. Disordered regions lie at residues 242 to 263, 283 to 347, and 479 to 677; these read CSSH…CSVS, SLLQ…QGNY, and CLQR…QPLQ. Polar residues-rich tracts occupy residues 243–263 and 283–310; these read SSHQ…CSVS and SLLQ…NSFS. Low complexity predominate over residues 323–334; it reads LLNPTPSLNSNN. Composition is skewed to polar residues over residues 335–347 and 483–505; these read FQIL…QGNY and QPPS…TQVR. Lys-498 is subject to N6-acetyllysine. 2 stretches are compositionally biased toward basic and acidic residues: residues 507–526 and 534–544; these read MSEK…EKAN and ARAKERGERNI. Phosphoserine is present on Ser-549. The span at 572–592 shows a compositional bias: basic and acidic residues; the sequence is KPKDRDNKKPKTYSKLKEKTK. Lys-595 participates in a covalent cross-link: Glycyl lysine isopeptide (Lys-Gly) (interchain with G-Cter in SUMO2). Ser-610 is subject to Phosphoserine. Residues 617–630 show a composition bias toward basic and acidic residues; sequence AEQRSQHTFKEQHS. Residues 631 to 643 show a composition bias toward basic residues; that stretch reads QKRRSNRQIKRKK. Residues 644–659 show a composition bias toward basic and acidic residues; sequence YAEDAEGKQSEEEVKG. Chromo domains lie at 689-760 and 772-838; these read AIVD…HFLA and VEVD…HLDR. The LXXLL motif 1 motif lies at 867-871; the sequence is LNWLL. In terms of domain architecture, Helicase ATP-binding spans 871–1045; sequence LFNWYNRRNC…FSLLHFLEPL (175 aa). Residue 884-891 coordinates ATP; it reads DEMGLGKT. A DEAH box motif is present at residues 996–999; sequence DEAH. Positions 1035 to 1039 match the LXXLL motif 2 motif; sequence LFSLL. A Helicase C-terminal domain is found at 1185–1336; sequence LIDKLLPKMK…KAVLQSMSGR (152 aa). Positions 1460-1484 are disordered; sequence KDELAELSEAESEGEEKPKLRRPCD. A compositionally biased stretch (acidic residues) spans 1464 to 1473; it reads AELSEAESEG. A phosphoserine mark is found at Ser-1467 and Ser-1471. A compositionally biased stretch (basic and acidic residues) spans 1474 to 1484; it reads EEKPKLRRPCD. Residues Lys-1587, Lys-1737, and Lys-1902 each participate in a glycyl lysine isopeptide (Lys-Gly) (interchain with G-Cter in SUMO2) cross-link. Ser-2025 is subject to Phosphoserine. The LXXLL motif 3 signature appears at 2030 to 2034; sequence LPRLL. Residue Lys-2037 forms a Glycyl lysine isopeptide (Lys-Gly) (interchain with G-Cter in SUMO2) linkage. Positions 2046 to 2238 are disordered; the sequence is VKSESLTEEP…TQDSFQANNG (193 aa). Phosphoserine is present on residues Ser-2057 and Ser-2058. Lys-2073 is covalently cross-linked (Glycyl lysine isopeptide (Lys-Gly) (interchain with G-Cter in SUMO2)). Phosphoserine occurs at positions 2074 and 2078. Residues 2083 to 2092 are compositionally biased toward polar residues; that stretch reads VLSQATGDQK. The segment covering 2093-2103 has biased composition (basic and acidic residues); that stretch reads SGGKSETDRRM. Residues 2127 to 2193 are compositionally biased toward low complexity; that stretch reads SQSSSDSDSD…SSSSSSSSSS (67 aa). The span at 2201-2215 shows a compositional bias: basic and acidic residues; it reads DVQKREGTPHRKAYD. Polar residues predominate over residues 2220–2238; the sequence is ASLSTTQDETQDSFQANNG. A binds A/T-rich DNA region spans residues 2331-2471; that stretch reads QMSKVKKHVR…LSYPQPQRIP (141 aa). Residues Lys-2349, Lys-2355, and Lys-2360 each participate in a glycyl lysine isopeptide (Lys-Gly) (interchain with G-Cter in SUMO2) cross-link. The interval 2428–2435 is a.T hook-like; sequence KKRRGRRR. The disordered stretch occupies residues 2473-2494; that stretch reads TESPVPVINLKDGTRLAGDDAP. Residues 2484–2494 show a composition bias toward basic and acidic residues; it reads DGTRLAGDDAP. Positions 2710 to 2714 match the LXXLL motif 4 motif; the sequence is LPNLL. The interval 2724–2770 is disordered; sequence AESGAEEKRGNDSKELEGKKERTESQSPENGGERCVPGSPSTSSTAA. Positions 2728–2747 are enriched in basic and acidic residues; it reads AEEKRGNDSKELEGKKERTE. The LXXLL motif 5 motif lies at 2782 to 2786; it reads LNPLL. Basic and acidic residues predominate over residues 2818 to 2847; sequence KNKSDDLDSSKSVEIKEENSRVRDQEEKGG. A disordered region spans residues 2818–2885; that stretch reads KNKSDDLDSS…SEDSDSSNED (68 aa). Lys-2833 is covalently cross-linked (Glycyl lysine isopeptide (Lys-Gly) (interchain with G-Cter in SUMO2)). Residues 2864–2876 are compositionally biased toward low complexity; it reads RASSGSDSSSSSS.

It belongs to the SNF2/RAD54 helicase family. In terms of assembly, interacts with PPARA. Probably interacts with ESR1 and NR1I3. Phosphorylated on serine and tyrosine residues. As to expression, expressed in osteoprogenitor cells during development and in mature bone (at protein level).

It localises to the cytoplasm. The protein resides in the nucleus. The enzyme catalyses ATP + H2O = ADP + phosphate + H(+). Functionally, probable ATP-dependent chromatin-remodeling factor. Acts as a transcriptional coactivator for PPARA and possibly other nuclear receptors. Has DNA-dependent ATPase activity and binds to A/T-rich DNA. Associates with A/T-rich regulatory regions in promoters of genes that participate in the differentiation of progenitors during osteogenesis. This Mus musculus (Mouse) protein is Chromodomain-helicase-DNA-binding protein 9 (Chd9).